The sequence spans 940 residues: Protein translocase subunit SecA 1 (940 aa).

ATP is bound by residues Q83, 101 to 105 (GEGKT), and D490. The interval 856-940 (AEQGGTATAA…AKPPKSVKRR (85 aa)) is disordered.

The protein belongs to the SecA family. Monomer and homodimer. Part of the essential Sec protein translocation apparatus which comprises SecA, SecYEG and auxiliary proteins SecDF. Other proteins may also be involved.

The protein resides in the cell membrane. The protein localises to the cytoplasm. It carries out the reaction ATP + H2O + cellular proteinSide 1 = ADP + phosphate + cellular proteinSide 2.. Its function is as follows. Part of the Sec protein translocase complex. Interacts with the SecYEG preprotein conducting channel. Has a central role in coupling the hydrolysis of ATP to the transfer of proteins into and across the cell membrane, serving as an ATP-driven molecular motor driving the stepwise translocation of polypeptide chains across the membrane. This chain is Protein translocase subunit SecA 1, found in Mycolicibacterium paratuberculosis (strain ATCC BAA-968 / K-10) (Mycobacterium paratuberculosis).